A 193-amino-acid chain; its full sequence is Acyl carrier protein phosphodiesterase (193 aa).

It belongs to the AcpH family.

The catalysed reaction is holo-[ACP] + H2O = apo-[ACP] + (R)-4'-phosphopantetheine + H(+). Its function is as follows. Converts holo-ACP to apo-ACP by hydrolytic cleavage of the phosphopantetheine prosthetic group from ACP. The polypeptide is Acyl carrier protein phosphodiesterase (Salmonella paratyphi A (strain ATCC 9150 / SARB42)).